The following is a 359-amino-acid chain: 3-dehydroquinate synthase (359 aa).

Residues 71-76 (DGEAYK), 105-109 (GVVGD), 129-130 (TT), Lys142, and Lys151 each bind NAD(+). Positions 184, 247, and 264 each coordinate Zn(2+).

The protein belongs to the sugar phosphate cyclases superfamily. Dehydroquinate synthase family. Co(2+) is required as a cofactor. The cofactor is Zn(2+). It depends on NAD(+) as a cofactor.

It is found in the cytoplasm. The enzyme catalyses 7-phospho-2-dehydro-3-deoxy-D-arabino-heptonate = 3-dehydroquinate + phosphate. It participates in metabolic intermediate biosynthesis; chorismate biosynthesis; chorismate from D-erythrose 4-phosphate and phosphoenolpyruvate: step 2/7. In terms of biological role, catalyzes the conversion of 3-deoxy-D-arabino-heptulosonate 7-phosphate (DAHP) to dehydroquinate (DHQ). This Burkholderia cenocepacia (strain ATCC BAA-245 / DSM 16553 / LMG 16656 / NCTC 13227 / J2315 / CF5610) (Burkholderia cepacia (strain J2315)) protein is 3-dehydroquinate synthase.